A 314-amino-acid polypeptide reads, in one-letter code: 3'-5' exoribonuclease YhaM (314 aa).

Residues 163–279 (HVVSMLDLAK…LHYIDNLDAK (117 aa)) form the HD domain.

This sequence belongs to the YhaM family.

In terms of biological role, shows a 3'-5' exoribonuclease activity. This is 3'-5' exoribonuclease YhaM from Bacillus mycoides (strain KBAB4) (Bacillus weihenstephanensis).